Reading from the N-terminus, the 282-residue chain is 2-dehydro-3-deoxyphosphooctonate aldolase (282 aa).

Belongs to the KdsA family.

The protein resides in the cytoplasm. The enzyme catalyses D-arabinose 5-phosphate + phosphoenolpyruvate + H2O = 3-deoxy-alpha-D-manno-2-octulosonate-8-phosphate + phosphate. Its pathway is carbohydrate biosynthesis; 3-deoxy-D-manno-octulosonate biosynthesis; 3-deoxy-D-manno-octulosonate from D-ribulose 5-phosphate: step 2/3. The protein operates within bacterial outer membrane biogenesis; lipopolysaccharide biosynthesis. This is 2-dehydro-3-deoxyphosphooctonate aldolase from Shewanella sp. (strain W3-18-1).